Here is a 446-residue protein sequence, read N- to C-terminus: Amino-acid acetyltransferase (446 aa).

One can recognise an N-acetyltransferase domain in the interval E299–L431.

Belongs to the acetyltransferase family. ArgA subfamily.

The protein resides in the cytoplasm. The enzyme catalyses L-glutamate + acetyl-CoA = N-acetyl-L-glutamate + CoA + H(+). The protein operates within amino-acid biosynthesis; L-arginine biosynthesis; N(2)-acetyl-L-ornithine from L-glutamate: step 1/4. The sequence is that of Amino-acid acetyltransferase from Aliivibrio fischeri (strain MJ11) (Vibrio fischeri).